The chain runs to 453 residues: Choline kinase alpha (453 aa).

Positions 22 to 81 are disordered; the sequence is CGGNAAPTPGVGQQRDAAGELESKQLGGRTQPLALPPPPPPPLPLPPPPSPPLADEQPEP. Residues 55-73 show a composition bias toward pro residues; that stretch reads ALPPPPPPPLPLPPPPSPP. A Phosphoserine modification is found at Ser-71. Residues 113-119, Arg-142, and 203-209 contribute to the ATP site; these read RGGLSNM and QFIPSRR. 115 to 117 lines the phosphocholine pocket; the sequence is GLS. Lys-243 is subject to N6-acetyllysine. Residue Ser-275 is modified to Phosphoserine. Positions 304 and 326 each coordinate ATP.

It belongs to the choline/ethanolamine kinase family. As to quaternary structure, homodimer. Heterodimer with CHKB. Monomer; acetylation by KAT5 promotes dissociation of the homodimer and monomerization. Post-translationally, phosphorylated at Ser-275 by AMPK in response to glucose deprivation, leading to localization to lipid droplets. Acetylated by KAT5 at Lys-243 following phosphorylation by AMPK, leading to monomerization and conversion into a tyrosine-protein kinase. As to expression, expressed ubiquitously with the highest level in testis.

It localises to the cytoplasm. The protein localises to the cytosol. It is found in the lipid droplet. The enzyme catalyses choline + ATP = phosphocholine + ADP + H(+). The catalysed reaction is ethanolamine + ATP = phosphoethanolamine + ADP + H(+). It catalyses the reaction L-tyrosyl-[protein] + ATP = O-phospho-L-tyrosyl-[protein] + ADP + H(+). It participates in phospholipid metabolism; phosphatidylcholine biosynthesis; phosphocholine from choline: step 1/1. The protein operates within phospholipid metabolism; phosphatidylethanolamine biosynthesis; phosphatidylethanolamine from ethanolamine: step 1/3. In terms of biological role, plays a key role in phospholipid biosynthesis by catalyzing the phosphorylation of free choline to phosphocholine, the first step in phosphatidylcholine biosynthesis. Also phosphorylates ethanolamine, thereby contributing to phosphatidylethanolamine biosynthesis. Has higher activity with choline. This isoform plays a key role in lipolysis of lipid droplets following glucose deprivation. In response to glucose deprivation, phosphorylated by AMPK, promoting localization to lipid droplets. Phosphorylation is followed by acetylation by KAT5, leading to dissociation of the homodimer into a monomer. Monomeric CHKA isoform 1 is converted into a tyrosine-protein kinase, which phosphorylates lipid droplet structural proteins PLIN2 and PLIN3, leading to lipolysis of lipid droplets. The sequence is that of Choline kinase alpha (Chka) from Mus musculus (Mouse).